A 447-amino-acid polypeptide reads, in one-letter code: uncharacterized protein (447 aa).

[4Fe-4S] cluster-binding residues include cysteine 87, cysteine 93, cysteine 96, and cysteine 162. Positions 284, 313, 334, and 375 each coordinate S-adenosyl-L-methionine. Cysteine 402 (nucleophile) is an active-site residue.

Belongs to the class I-like SAM-binding methyltransferase superfamily. RNA M5U methyltransferase family.

This is an uncharacterized protein from Nanoarchaeum equitans (strain Kin4-M).